The following is a 518-amino-acid chain: UPF0288 protein Mbar_A0706 (518 aa).

Belongs to the UPF0288 family.

This is UPF0288 protein Mbar_A0706 from Methanosarcina barkeri (strain Fusaro / DSM 804).